The following is a 522-amino-acid chain: Sorting nexin-1 (522 aa).

A disordered region spans residues 1–144 (MASGGGGCSA…EEEEQEDQFD (144 aa)). 2 positions are modified to phosphoserine: serine 32 and serine 39. Over residues 35 to 45 (EAGDSDTEGED) the composition is skewed to acidic residues. Residues threonine 41 and threonine 48 each carry the phosphothreonine modification. Over residues 55–65 (KPQSPKKTTSL) the composition is skewed to polar residues. Phosphoserine is present on residues serine 58 and serine 72. The span at 71 to 80 (GSKENGIHED) shows a compositional bias: basic and acidic residues. Residues 98 to 125 (LDSTQNNQKTMPGKTLTSHSPQEATNSP) show a composition bias toward polar residues. A compositionally biased stretch (acidic residues) spans 132–143 (EELEEEEQEDQF). Residues 143 to 272 (FDLTVGITDP…EFLEKEELPR (130 aa)) enclose the PX domain. 3 residues coordinate a 1,2-diacyl-sn-glycero-3-phospho-(1D-myo-inositol-3-phosphate): arginine 186, serine 188, and lysine 214. Position 188 is a phosphoserine (serine 188). Lysine 237 bears the N6-acetyllysine mark. Arginine 238 contributes to the a 1,2-diacyl-sn-glycero-3-phospho-(1D-myo-inositol-3-phosphate) binding site. A Phosphoserine modification is found at serine 280. The segment at 281–298 (GAGLLKMFNKATDAVSKM) is membrane-binding amphipathic helix. Residues 302–522 (MNESDIWFEE…AFLPEAKAIS (221 aa)) form the BAR domain.

Belongs to the sorting nexin family. In terms of assembly, predominantly forms heterodimers with BAR domain-containing sorting nexins SNX5, SNX6 and SNX32. Can self-associate to form homodimers. The heterodimers are proposed to self-assemble into helical arrays on the membrane to stabilize and expand local membrane curvature underlying endosomal tubule formation. Thought to be a component of the originally described retromer complex (also called SNX-BAR retromer) which is a pentamer containing the heterotrimeric retromer cargo-selective complex (CSC), also described as vacuolar protein sorting subcomplex (VPS) and a heterodimeric membrane-deforming subcomplex formed between SNX1 or SNX2 and SNX5 or SNX6 (also called SNX-BAR subcomplex); the respective CSC and SNX-BAR subcomplexes associate with low affinity. Interacts with SNX5, SNX6, SNX32, VPS26A, VPS29, VPS35, DRD5, DENND5A, KALRN, RHOG (GDP-bound form). The interaction with SNX2 is reported controversially. Interacts with DNAJC13; prevented by presence of HGS. Interacts with HGS.

Its subcellular location is the endosome membrane. The protein resides in the golgi apparatus. It localises to the trans-Golgi network membrane. The protein localises to the early endosome membrane. It is found in the cell projection. Its subcellular location is the lamellipodium. Involved in several stages of intracellular trafficking. Interacts with membranes containing phosphatidylinositol 3-phosphate (PtdIns(3P)) or phosphatidylinositol 3,5-bisphosphate (PtdIns(3,5)P2). Acts in part as component of the retromer membrane-deforming SNX-BAR subcomplex. The SNX-BAR retromer mediates retrograde transport of cargo proteins from endosomes to the trans-Golgi network (TGN) and is involved in endosome-to-plasma membrane transport for cargo protein recycling. The SNX-BAR subcomplex functions to deform the donor membrane into a tubular profile called endosome-to-TGN transport carrier (ETC). Can sense membrane curvature and has in vitro vesicle-to-membrane remodeling activity. Involved in retrograde endosome-to-TGN transport of lysosomal enzyme receptors (IGF2R, M6PR and SORT1). Plays a role in targeting ligand-activated EGFR to the lysosomes for degradation after endocytosis from the cell surface and release from the Golgi. Involvement in retromer-independent endocytic trafficking of P2RY1 and lysosomal degradation of protease-activated receptor-1/F2R. Promotes KALRN- and RHOG-dependent but retromer-independent membrane remodeling such as lamellipodium formation; the function is dependent on GEF activity of KALRN. Required for endocytosis of DRD5 upon agonist stimulation but not for basal receptor trafficking. The protein is Sorting nexin-1 (Snx1) of Mus musculus (Mouse).